We begin with the raw amino-acid sequence, 938 residues long: Cyclin-dependent kinase-like 5 (938 aa).

Residues 13 to 297 (FEILGVVGEG…TEQCLNHPTF (285 aa)) form the Protein kinase domain. ATP is bound by residues 19 to 27 (VGEGAYGVV) and Lys-42. Asp-135 functions as the Proton acceptor in the catalytic mechanism. 4 disordered regions span residues 298–348 (QTQR…DIQN), 382–566 (KTYQ…RHSK), 646–865 (SPQP…LTAQ), and 877–938 (HPLS…KWKQ). Polar residues-rich tracts occupy residues 319-331 (ESST…QSTK) and 382-402 (KTYQ…NNNI). Ser-407 carries the phosphoserine modification. Residues 407-417 (SPKEAKSKTEF) show a composition bias toward basic and acidic residues. 3 stretches are compositionally biased toward polar residues: residues 434-462 (LKSS…QPSE), 473-482 (IPQSSRSPSY), and 494-548 (DSKS…SGRN). The residue at position 479 (Ser-479) is a Phosphoserine. Basic and acidic residues-rich tracts occupy residues 549–559 (NRNEGTLDSRR) and 679–704 (QKSE…RHLY). Ser-720 bears the Phosphoserine mark. A compositionally biased stretch (polar residues) spans 728–748 (HENNVSTRVSSLPSDSSSGTN). At Ser-761 the chain carries Phosphoserine. Basic and acidic residues-rich tracts occupy residues 769–778 (DQLKEKEKQG) and 817–827 (RPKEWRPEKLS). Positions 880-891 (SQATGGSSNIRQ) are enriched in polar residues.

This sequence belongs to the protein kinase superfamily. CMGC Ser/Thr protein kinase family. CDC2/CDKX subfamily. As to quaternary structure, interacts with MECP2. In terms of processing, autophosphorylated.

The protein localises to the nucleus. Its subcellular location is the cytoplasm. It localises to the cytoskeleton. It is found in the cilium basal body. The protein resides in the microtubule organizing center. The protein localises to the centrosome. It catalyses the reaction L-seryl-[protein] + ATP = O-phospho-L-seryl-[protein] + ADP + H(+). The catalysed reaction is L-threonyl-[protein] + ATP = O-phospho-L-threonyl-[protein] + ADP + H(+). Mediates phosphorylation of MECP2. May regulate ciliogenesis. This Mus musculus (Mouse) protein is Cyclin-dependent kinase-like 5.